Reading from the N-terminus, the 179-residue chain is 3-hydroxyanthranilate 3,4-dioxygenase (179 aa).

Arg-47 serves as a coordination point for O2. 3 residues coordinate Fe cation: His-51, Glu-57, and His-96. Substrate is bound at residue Glu-57. Positions 100 and 110 each coordinate substrate. 4 residues coordinate Fe cation: Cys-125, Cys-128, Cys-162, and Cys-165.

It belongs to the 3-HAO family. Fe(2+) is required as a cofactor.

It carries out the reaction 3-hydroxyanthranilate + O2 = (2Z,4Z)-2-amino-3-carboxymuconate 6-semialdehyde. The protein operates within cofactor biosynthesis; NAD(+) biosynthesis; quinolinate from L-kynurenine: step 3/3. In terms of biological role, catalyzes the oxidative ring opening of 3-hydroxyanthranilate to 2-amino-3-carboxymuconate semialdehyde, which spontaneously cyclizes to quinolinate. The sequence is that of 3-hydroxyanthranilate 3,4-dioxygenase from Bacillus cereus (strain ATCC 10987 / NRS 248).